The chain runs to 312 residues: MFKHETVLLHETVDMLEVKPDGIYVDATLGGAGHSEYLLNKLNEKGHLFAFDQDQTAIDNAKIKLADYSDKVTFIKANFRDMKEALNERGIEAVDGILYDLGVSSPQLDERERGFSYHQDAALDMRMDQEQELTAKTVVNEWSYQDLIRIFFQYGEEKFSKQIAREIERRREVKPIETTGELVDIIKTAIPAPARRKGGHPGKRTFQAIRIAVNDELGAVEDSLEKALTLIKPGGRISVITFHSLEDRITKQLFQEATKGPDLPPGLPVIPDEYKPDFKLATRKPIVPSEEELEQNNRARSAKLRVIEKIIK.

S-adenosyl-L-methionine-binding positions include 32–34, Asp-52, Phe-79, Asp-100, and Gln-107; that span reads AGH.

Belongs to the methyltransferase superfamily. RsmH family.

It localises to the cytoplasm. The catalysed reaction is cytidine(1402) in 16S rRNA + S-adenosyl-L-methionine = N(4)-methylcytidine(1402) in 16S rRNA + S-adenosyl-L-homocysteine + H(+). In terms of biological role, specifically methylates the N4 position of cytidine in position 1402 (C1402) of 16S rRNA. The polypeptide is Ribosomal RNA small subunit methyltransferase H (Listeria monocytogenes serovar 1/2a (strain ATCC BAA-679 / EGD-e)).